A 144-amino-acid chain; its full sequence is Large ribosomal subunit protein uL13 (144 aa).

Belongs to the universal ribosomal protein uL13 family. Part of the 50S ribosomal subunit.

Functionally, this protein is one of the early assembly proteins of the 50S ribosomal subunit, although it is not seen to bind rRNA by itself. It is important during the early stages of 50S assembly. This is Large ribosomal subunit protein uL13 from Ruminiclostridium cellulolyticum (strain ATCC 35319 / DSM 5812 / JCM 6584 / H10) (Clostridium cellulolyticum).